A 347-amino-acid chain; its full sequence is Phosphate acyltransferase (347 aa).

Belongs to the PlsX family. In terms of assembly, homodimer. Probably interacts with PlsY.

It localises to the cytoplasm. The catalysed reaction is a fatty acyl-[ACP] + phosphate = an acyl phosphate + holo-[ACP]. The protein operates within lipid metabolism; phospholipid metabolism. Catalyzes the reversible formation of acyl-phosphate (acyl-PO(4)) from acyl-[acyl-carrier-protein] (acyl-ACP). This enzyme utilizes acyl-ACP as fatty acyl donor, but not acyl-CoA. The polypeptide is Phosphate acyltransferase (Sinorhizobium medicae (strain WSM419) (Ensifer medicae)).